A 481-amino-acid polypeptide reads, in one-letter code: Glutamate--tRNA ligase 1 (481 aa).

Residues 11–21 carry the 'HIGH' region motif; sequence PSPTGSLHIGG. A 'KMSKS' region motif is present at residues 244-248; the sequence is KLSKR. ATP is bound at residue K247.

This sequence belongs to the class-I aminoacyl-tRNA synthetase family. Glutamate--tRNA ligase type 1 subfamily. Monomer.

Its subcellular location is the cytoplasm. The enzyme catalyses tRNA(Glu) + L-glutamate + ATP = L-glutamyl-tRNA(Glu) + AMP + diphosphate. In terms of biological role, catalyzes the attachment of glutamate to tRNA(Glu) in a two-step reaction: glutamate is first activated by ATP to form Glu-AMP and then transferred to the acceptor end of tRNA(Glu). The protein is Glutamate--tRNA ligase 1 of Caldanaerobacter subterraneus subsp. tengcongensis (strain DSM 15242 / JCM 11007 / NBRC 100824 / MB4) (Thermoanaerobacter tengcongensis).